A 124-amino-acid chain; its full sequence is Small ribosomal subunit protein uS12 (124 aa).

The protein belongs to the universal ribosomal protein uS12 family. As to quaternary structure, part of the 30S ribosomal subunit. Contacts proteins S8 and S17. May interact with IF1 in the 30S initiation complex.

In terms of biological role, with S4 and S5 plays an important role in translational accuracy. Functionally, interacts with and stabilizes bases of the 16S rRNA that are involved in tRNA selection in the A site and with the mRNA backbone. Located at the interface of the 30S and 50S subunits, it traverses the body of the 30S subunit contacting proteins on the other side and probably holding the rRNA structure together. The combined cluster of proteins S8, S12 and S17 appears to hold together the shoulder and platform of the 30S subunit. The polypeptide is Small ribosomal subunit protein uS12 (Photorhabdus laumondii subsp. laumondii (strain DSM 15139 / CIP 105565 / TT01) (Photorhabdus luminescens subsp. laumondii)).